Consider the following 643-residue polypeptide: Fructose-1,6-bisphosphatase class 3 (643 aa).

Belongs to the FBPase class 3 family. It depends on Mn(2+) as a cofactor.

The enzyme catalyses beta-D-fructose 1,6-bisphosphate + H2O = beta-D-fructose 6-phosphate + phosphate. The protein operates within carbohydrate biosynthesis; gluconeogenesis. The chain is Fructose-1,6-bisphosphatase class 3 from Lacticaseibacillus casei (strain BL23) (Lactobacillus casei).